A 519-amino-acid polypeptide reads, in one-letter code: Sensor protein RprX (519 aa).

2 helical membrane-spanning segments follow: residues 5–25 (TIWI…YLQV) and 260–280 (IPSM…IYIV). Residues 296–517 (NMTHEFKTPI…KFIIALPLLK (222 aa)) form the Histidine kinase domain. His299 bears the Phosphohistidine; by autocatalysis mark.

Its subcellular location is the cell membrane. It catalyses the reaction ATP + protein L-histidine = ADP + protein N-phospho-L-histidine.. Its function is as follows. Member of the two-component regulatory system RprX/RprY. May activate RprY by phosphorylation. This Bacteroides fragilis (strain YCH46) protein is Sensor protein RprX (rprX).